The sequence spans 630 residues: GATA-type transcription factor SRE1 (630 aa).

Disordered regions lie at residues 1–139 (MTGL…TPLW) and 162–203 (DRPT…RLTD). Polar residues-rich tracts occupy residues 66-82 (DNTQ…QLQN), 115-133 (KAQS…NCGT), and 175-196 (YGSS…TNDG). A GATA-type 1 zinc finger spans residues 128–152 (CSNCGTKRTPLWRRSPTGATICNAC). The cystein-rich region (CRR) stretch occupies residues 219–237 (CPGGGSCNGTGGAEGCDGC). Positions 256–283 (HTPRTSPQVSTQGGPGSTEGDAGSSNPE) are disordered. Over residues 258 to 267 (PRTSPQVSTQ) the composition is skewed to polar residues. The GATA-type 2 zinc finger occupies 291 to 315 (CQNCQTTVTPLWRRDENGHPICNAC). The segment at 339–609 (KRVVPAMREQ…AKAERRARLQ (271 aa)) is disordered. Over residues 349 to 363 (SPPSATQSSNGSVSP) the composition is skewed to polar residues. Composition is skewed to low complexity over residues 436 to 447 (NNHNNGETTNTH) and 492 to 503 (SSSSASFPNNNP). Residues 504-513 (GRFNSISSLL) show a composition bias toward polar residues. Over residues 558–568 (SHSPPRFSPSL) the composition is skewed to low complexity. Residues 595–609 (VDHRDAKAERRARLQ) show a composition bias toward basic and acidic residues. The stretch at 595 to 630 (VDHRDAKAERRARLQREAQDMREALKAKERELALLE) forms a coiled coil.

It localises to the nucleus. Functionally, GATA-type transcription repressor that regulates iron- acquisition genes through specific binding the GATA sequence element 5'-(G/A)ATC(T/A)GATAA-3' of target promoters in an iron- and zinc-dependent manner. Regulation occurs via direct binding of iron ions. Iron acquisition regulation is critical for survival under both iron-limiting conditions (to acquire essential iron) and iron-replete conditions (to limit iron toxicity). SRE1 targets include genes encoding a number of key iron-regulated factors such as those involved in siderophore biosynthesis, presumed ferric reductase activity, iron-responsive transcriptional regulation, oxidative stress response, as well as genes encoding a number of putative oxidoreductases, metabolic and mitochondrial enzymes, superoxide dismutase, and genes previously identified as induced during nitrosative stress. The chain is GATA-type transcription factor SRE1 from Ajellomyces capsulatus (Darling's disease fungus).